We begin with the raw amino-acid sequence, 217 residues long: Large ribosomal subunit protein uL3 (217 aa).

It belongs to the universal ribosomal protein uL3 family. Part of the 50S ribosomal subunit. Forms a cluster with proteins L14 and L19.

One of the primary rRNA binding proteins, it binds directly near the 3'-end of the 23S rRNA, where it nucleates assembly of the 50S subunit. This Mycobacterium leprae (strain TN) protein is Large ribosomal subunit protein uL3.